The sequence spans 274 residues: Large ribosomal subunit protein uL2 (274 aa).

Residues A224–Y256 are disordered. The segment covering D229–V246 has biased composition (basic and acidic residues).

The protein belongs to the universal ribosomal protein uL2 family. In terms of assembly, part of the 50S ribosomal subunit. Forms a bridge to the 30S subunit in the 70S ribosome.

One of the primary rRNA binding proteins. Required for association of the 30S and 50S subunits to form the 70S ribosome, for tRNA binding and peptide bond formation. It has been suggested to have peptidyltransferase activity; this is somewhat controversial. Makes several contacts with the 16S rRNA in the 70S ribosome. The protein is Large ribosomal subunit protein uL2 of Acidovorax ebreus (strain TPSY) (Diaphorobacter sp. (strain TPSY)).